We begin with the raw amino-acid sequence, 31 residues long: Cytochrome b6-f complex subunit 6 (31 aa).

The helical transmembrane segment at 3–23 (AIVAYIGFLALFTGIAAGLLF) threads the bilayer.

This sequence belongs to the PetL family. In terms of assembly, the 4 large subunits of the cytochrome b6-f complex are cytochrome b6, subunit IV (17 kDa polypeptide, PetD), cytochrome f and the Rieske protein, while the 4 small subunits are PetG, PetL, PetM and PetN. The complex functions as a dimer.

It is found in the cellular thylakoid membrane. Functionally, component of the cytochrome b6-f complex, which mediates electron transfer between photosystem II (PSII) and photosystem I (PSI), cyclic electron flow around PSI, and state transitions. PetL is important for photoautotrophic growth as well as for electron transfer efficiency and stability of the cytochrome b6-f complex. The protein is Cytochrome b6-f complex subunit 6 of Nostoc sp. (strain PCC 7120 / SAG 25.82 / UTEX 2576).